The chain runs to 80 residues: MQNKGVVLTLFLVVSMAIVISSTKEKRAVIQKKYVDFKDRKYPWKEECFETCARTFTNGDQSKVSEVVPDYFKCICYVLI.

An N-terminal signal peptide occupies residues 1 to 22 (MQNKGVVLTLFLVVSMAIVISS).

The protein belongs to the scoloptoxin-15 family. Post-translationally, contains 2 disulfide bonds. Expressed by the venom gland.

The protein localises to the secreted. The chain is U-scoloptoxin(15)-Er1a from Ethmostigmus rubripes (Giant centipede).